Reading from the N-terminus, the 191-residue chain is Bcl-2-like protein 10 (191 aa).

A BH1 motif is present at residues 79–98 (LSKDQDFSWSQLVMLLAFAG). Lys-112 is covalently cross-linked (Glycyl lysine isopeptide (Lys-Gly) (interchain with G-Cter in ubiquitin)). Positions 144-155 (RLEALGGWDGFC) match the BH2 motif. The helical transmembrane segment at 166-183 (FWRRLLIQAFLSGFFATA) threads the bilayer.

Belongs to the Bcl-2 family. In terms of assembly, interacts with BAX. Interacts with BCL2 and BCL2L1/BCLX. Interacts with APAF1. Interacts with ITPR1, ITPR2 and ITPR3; the interaction with ITPR1 is increased in the presence of AHCLY1. Interacts with AHCYL1. Interacts with HIP1R (via ENTH and I/LWEQ domains). Interacts with CASP9. Interacts with BCL2L11/BIM. Interacts with BIK. Interacts with UBQLN4. Interacts with NME2/NM23-H2. Interacts with PMAIP1/NOXA. Interacts with TPX2. Interacts with UBQLN1; in the cytoplasm. Interacts (via BH1 domain) with BECN1. Ca(2+) is required as a cofactor. In terms of processing, monoubiquitinated by UBQLN1; results in stabilization of BCL2L10 protein abundance and in relocalization from mitochondria to cytoplasm. As to expression, expressed in multiple embryonic tissues. Restricted to the ovary and testis in adult mice.

The protein localises to the mitochondrion. Its subcellular location is the nucleus membrane. The protein resides in the endoplasmic reticulum. It localises to the cytoplasm. It is found in the cytoskeleton. The protein localises to the spindle. In terms of biological role, promotes cell survival by suppressing apoptosis induced by BAX but not BAK. Increases binding of AHCYL1/IRBIT to ITPR1. Reduces ITPR1-mediated calcium release from the endoplasmic reticulum cooperatively with AHCYL1/IRBIT under normal cellular conditions. Under apoptotic stress conditions, dissociates from ITPR1 and is displaced from mitochondria-associated endoplasmic reticulum membranes, leading to increased Ca(2+) transfer to mitochondria which promotes apoptosis. Required for the correct formation of the microtubule organizing center during oocyte cell division, potentially via regulation of protein abundance and localization of other microtubule organizing center components such as AURKA and TPX2. This chain is Bcl-2-like protein 10, found in Mus musculus (Mouse).